Here is a 486-residue protein sequence, read N- to C-terminus: Matrilin-3 (486 aa).

A signal peptide spans 1–28 (MPRPAPARRLPGLLLLLWPLLLLPSAAP). The tract at residues 32–75 (ARPGFRRLETRGPGGSPGRRPSPAAPDGAPASGTSEPGRARGAG) is disordered. Over residues 49 to 64 (GRRPSPAAPDGAPASG) the composition is skewed to low complexity. The VWFA domain maps to 83-258 (DLVFIIDSSR…GVIEKLSSRF (176 aa)). Arg198 bears the Omega-N-methylarginine mark. 4 EGF-like domains span residues 264 to 305 (ALDP…KTCS), 306 to 347 (ALDR…KTCS), 348 to 389 (AQDK…KTCS), and 390 to 431 (VRDK…KTCS). 12 disulfide bridges follow: Cys268-Cys279, Cys275-Cys289, Cys291-Cys304, Cys310-Cys321, Cys317-Cys331, Cys333-Cys346, Cys352-Cys363, Cys359-Cys373, Cys375-Cys388, Cys394-Cys405, Cys401-Cys415, and Cys417-Cys430. A Phosphoserine; by FAM20C modification is found at Ser441. Thr442 bears the Phosphothreonine; by FAM20C mark. A coiled-coil region spans residues 456–480 (DKVSSYLQRLNTKLDDILEKLKINE).

As to quaternary structure, can form homooligomers (monomers, dimers, trimers and tetramers) and heterooligomers with matrilin-1. Interacts with COMP. Component of a complex containing at least CRELD2, MANF, MATN3 and PDIA4. Expressed only in cartilaginous tissues, such as vertebrae, ribs and shoulders.

The protein resides in the secreted. Functionally, major component of the extracellular matrix of cartilage and may play a role in the formation of extracellular filamentous networks. In Homo sapiens (Human), this protein is Matrilin-3 (MATN3).